Here is a 478-residue protein sequence, read N- to C-terminus: Proline--tRNA ligase (478 aa).

The protein belongs to the class-II aminoacyl-tRNA synthetase family. ProS type 3 subfamily. As to quaternary structure, homodimer.

Its subcellular location is the cytoplasm. It catalyses the reaction tRNA(Pro) + L-proline + ATP = L-prolyl-tRNA(Pro) + AMP + diphosphate. Catalyzes the attachment of proline to tRNA(Pro) in a two-step reaction: proline is first activated by ATP to form Pro-AMP and then transferred to the acceptor end of tRNA(Pro). This is Proline--tRNA ligase from Methanothrix thermoacetophila (strain DSM 6194 / JCM 14653 / NBRC 101360 / PT) (Methanosaeta thermophila).